A 345-amino-acid polypeptide reads, in one-letter code: Isopentenyl-diphosphate delta-isomerase (345 aa).

A substrate-binding site is contributed by 14 to 15 (RK). Residues Ser71, 72-74 (SMT), Ser102, and Asn130 contribute to the FMN site. 102-104 (SMR) provides a ligand contact to substrate. A substrate-binding site is contributed by Gln165. Glu166 serves as a coordination point for Mg(2+). FMN-binding positions include Lys197, Thr227, 277–279 (GLK), and 298–299 (AG).

This sequence belongs to the IPP isomerase type 2 family. As to quaternary structure, homooctamer. Dimer of tetramers. The cofactor is FMN. Requires NADPH as cofactor. Mg(2+) is required as a cofactor.

It localises to the cytoplasm. The enzyme catalyses isopentenyl diphosphate = dimethylallyl diphosphate. Involved in the biosynthesis of isoprenoids. Catalyzes the 1,3-allylic rearrangement of the homoallylic substrate isopentenyl (IPP) to its allylic isomer, dimethylallyl diphosphate (DMAPP). The sequence is that of Isopentenyl-diphosphate delta-isomerase from Rickettsia felis (strain ATCC VR-1525 / URRWXCal2) (Rickettsia azadi).